Reading from the N-terminus, the 451-residue chain is MIDSEALESERVKLKRDIADLRANLNRKEQCLRELEAAIAAGEDSDEAEESSNDMPTPQTKLTNDDIARYSRQLILQDFGVQGQLKLKNSSVLIVGMGGLGCPAAQYLVAAGCGHLGLIDYDEVERSNLHRQILHSEHRCGMSKAESARIALLELNSHCQIRCHSRLINSMNAMHIIRPYDVVLDCSDNVATRYLLNDACVMLRKPLVSGSALKMDGQLTVYGYGQGPCYRCIYPVPPPPEAVTNCGDGGVLGAVTGIIGAMQALEAIKVIIGLGDVMSGRLLIFDGSSFMFRNIRIRTKRPNCHVCSAQPLITELIDYEMFCGMHATDKDNPLDLLEPDQRLEVKEYHQKLQSQPHLLLDVRPPAEFEICQLPRSINVPLSEILDDSYLKRFAKQLEDKELPIVLLCRRGNDSQIAVQHITNRFPAHSIRDLVGGLHAWTGSVDATFPIY.

The segment at 42–62 (GEDSDEAEESSNDMPTPQTKL) is disordered. Residues 43–52 (EDSDEAEESS) show a composition bias toward acidic residues. Residue threonine 60 is modified to Phosphothreonine. ATP contacts are provided by residues glycine 99, aspartate 120, 127–131 (SNLHR), lysine 144, and 188–189 (DN). Residues cysteine 229 and cysteine 232 each coordinate Zn(2+). Residue cysteine 246 is the Glycyl thioester intermediate; for adenylyltransferase activity of the active site. 2 residues coordinate Zn(2+): cysteine 304 and cysteine 307. In terms of domain architecture, Rhodanese spans 353–449 (QSQPHLLLDV…WTGSVDATFP (97 aa)). The active-site Cysteine persulfide intermediate; for sulfurtransferase activity is the cysteine 408.

It in the N-terminal section; belongs to the HesA/MoeB/ThiF family. UBA4 subfamily. The cofactor is Zn(2+).

The protein localises to the cytoplasm. The catalysed reaction is [molybdopterin-synthase sulfur-carrier protein]-C-terminal Gly-Gly + ATP + H(+) = [molybdopterin-synthase sulfur-carrier protein]-C-terminal Gly-Gly-AMP + diphosphate. It carries out the reaction [molybdopterin-synthase sulfur-carrier protein]-C-terminal Gly-Gly-AMP + S-sulfanyl-L-cysteinyl-[cysteine desulfurase] + AH2 = [molybdopterin-synthase sulfur-carrier protein]-C-terminal-Gly-aminoethanethioate + L-cysteinyl-[cysteine desulfurase] + A + AMP + 2 H(+). It functions in the pathway tRNA modification; 5-methoxycarbonylmethyl-2-thiouridine-tRNA biosynthesis. It participates in cofactor biosynthesis; molybdopterin biosynthesis. Plays a central role in 2-thiolation of mcm(5)S(2)U at tRNA wobble positions of cytosolic tRNA(Lys), tRNA(Glu) and tRNA(Gln). Also essential during biosynthesis of the molybdenum cofactor. Acts by mediating the C-terminal thiocarboxylation of sulfur carriers URM1 and MOCS2A. Its N-terminus first activates URM1 and MOCS2A as acyl-adenylates (-COAMP), then the persulfide sulfur on the catalytic cysteine is transferred to URM1 and MOCS2A to form thiocarboxylation (-COSH) of their C-terminus. The reaction probably involves hydrogen sulfide that is generated from the persulfide intermediate and that acts as a nucleophile towards URM1 and MOCS2A. Subsequently, a transient disulfide bond is formed. Does not use thiosulfate as sulfur donor; NFS1 probably acting as a sulfur donor for thiocarboxylation reactions. The polypeptide is Adenylyltransferase and sulfurtransferase MOCS3-2 (Drosophila pseudoobscura pseudoobscura (Fruit fly)).